The chain runs to 501 residues: MSPYFKLSSALIFLAITMEALCSPIENTSTSNKDNDKETEHIEISAKPSGISRGALGQGFEIHREDLLSKQFEATGEKIFEDLPMDECTVTTTLGTIERDDSFYNSTESLYQSVASSTKISGSLKGAYTLGVSVAAVTNNIASSEEEVQGLSLNLKAYSMSSILKKNCVNTKPLSKDLVSDFEALDSEITKPWKLSSWKKYKVLLEKYGSRIVKESISGSSIYQYVFAKSSQKFNHRSFTVKACVSLAGPTKVGKLSFSGCTGVSQQEIEQSSSQSMIKKLVVRGGKTETRASLIGELDPDQINKFLIEAETDPSPIQYKFEPIWTILKTRYVGTEHFAKAVNLEQFYKGFLHFGCSYLHTTSAENKVAEMQKFDFAKTSDPDAPTYVCKVGPEGCQHHEDCHYRAAFWCECGGPYDLARTCFRHKFKKLKSGLTKKECYPNKESGFAWHGCRLHGLTCWCSAPNRSWEESWSGEDTNNALNDVHQVLMEKKRRDNAQQQY.

The N-terminal stretch at 1–22 (MSPYFKLSSALIFLAITMEALC) is a signal peptide. Residues 23–35 (SPIENTSTSNKDN) constitute a propeptide that is removed on maturation. Positions 23–359 (SPIENTSTSN…GFLHFGCSYL (337 aa)) constitute an MACPF domain. The stretch at 135–159 (AAVTNNIASSEEEVQGLSLNLKAYS) forms a coiled coil. The EGF-like domain maps to 388 to 422 (VCKVGPEGCQHHEDCHYRAAFWCECGGPYDLARTC). 3 disulfide bridges follow: Cys389–Cys402, Cys396–Cys410, and Cys412–Cys422.

The protein localises to the secreted. It localises to the nematocyst. In terms of biological role, causes lethal toxicity to the shrimp Palaemon paucidence, and hemolytic activity toward sheep red blood cells. This Phyllodiscus semoni (Night anemone) protein is DELTA-alicitoxin-Pse2a.